Consider the following 843-residue polypeptide: Complement component C7 (843 aa).

Positions 1 to 22 (MKVISLFILVGFIGEFQSFSSA) are cleaved as a signal peptide. Residues 27 to 80 (NCQWDFYAPWSECNGCTKTQTRRRSVAVYGQYGGQPCVGNAFETQSCEPTRGCP) form the TSP type-1 1 domain. 7 disulfide bridges follow: cysteine 28/cysteine 63, cysteine 39/cysteine 73, cysteine 42/cysteine 79, cysteine 85/cysteine 96, cysteine 91/cysteine 109, cysteine 103/cysteine 119, and cysteine 128/cysteine 165. A C-linked (Man) tryptophan glycan is attached at tryptophan 36. The region spanning 83 to 121 (EGCGERFRCFSGQCISKSLVCNGDSDCDEDSADEDRCED) is the LDL-receptor class A domain. The span at 108-120 (DCDEDSADEDRCE) shows a compositional bias: acidic residues. The segment at 108-143 (DCDEDSADEDRCEDSERRPSCDIDKPPPNIELTGNG) is disordered. The span at 121–132 (DSERRPSCDIDK) shows a compositional bias: basic and acidic residues. The region spanning 124–456 (RRPSCDIDKP…EYLDEFDPCH (333 aa)) is the MACPF domain. Asparagine 202 is a glycosylation site (N-linked (GlcNAc...) asparagine). A disordered region spans residues 219-240 (SRKRSFFRSSSSSSRSYTSHTN). Over residues 225 to 234 (FRSSSSSSRS) the composition is skewed to low complexity. 12 disulfide bridges follow: cysteine 337-cysteine 353, cysteine 433-cysteine 560, cysteine 455-cysteine 505, cysteine 457-cysteine 473, cysteine 460-cysteine 475, cysteine 477-cysteine 486, cysteine 512-cysteine 545, cysteine 523-cysteine 535, cysteine 571-cysteine 613, cysteine 599-cysteine 626, cysteine 631-cysteine 673, and cysteine 659-cysteine 688. The EGF-like domain maps to 457-487 (CRPCQNGGLATVEGTHCLCHCKPYTFGAACE). The TSP type-1 2 domain maps to 500–549 (DGGWSCWSSWSPCVQGKKTRSRECNNPPPSGGGRSCVGETTESTQCEDEE). C-linked (Man) tryptophan; partial glycosylation is found at tryptophan 503, tryptophan 506, and tryptophan 509. The disordered stretch occupies residues 516–538 (KKTRSRECNNPPPSGGGRSCVGE). 2 CCP regions span residues 545-615 (CEDE…RCGE) and 616-693 (DLRW…QKEN). 2 Sushi domains span residues 569–628 (EFCP…HCQK) and 629–690 (IACV…RCVQ). 2 factor I module (FIM) regions span residues 695–770 (LTQA…ASAE) and 771–843 (KACG…AETQ). O-linked (GalNAc...) threonine glycosylation occurs at threonine 696. Intrachain disulfides connect cysteine 702–cysteine 713, cysteine 715–cysteine 750, cysteine 721–cysteine 743, cysteine 728–cysteine 763, cysteine 773–cysteine 782, cysteine 776–cysteine 789, cysteine 791–cysteine 825, cysteine 797–cysteine 818, and cysteine 805–cysteine 838. N-linked (GlcNAc...) (complex) asparagine glycosylation occurs at asparagine 754.

Belongs to the complement C6/C7/C8/C9 family. Monomer or dimer; as a C5b-7 complex it can also form multimeric rosettes. Component of the membrane attack complex (MAC), composed of complement C5b, C6, C7, C8A, C8B, C8G and multiple copies of the pore-forming subunit C9. In terms of processing, C-, N- and O-glycosylated. O-glycosylated with core 1 or possibly core 8 glycans.

It localises to the secreted. It is found in the target cell membrane. Its activity is regulated as follows. Membrane attack complex (MAC) assembly is inhibited by CD59, thereby protecting self-cells from damage during complement activation. MAC assembly is also inhibited by clusterin (CLU) chaperones that inhibit polymerization of C9. Component of the membrane attack complex (MAC), a multiprotein complex activated by the complement cascade, which inserts into a target cell membrane and forms a pore, leading to target cell membrane rupture and cell lysis. The MAC is initiated by proteolytic cleavage of C5 into complement C5b in response to the classical, alternative, lectin and GZMK complement pathways. The complement pathways consist in a cascade of proteins that leads to phagocytosis and breakdown of pathogens and signaling that strengthens the adaptive immune system. C7 serves as a membrane anchor. During MAC assembly, associates with C5b and C6 to form the C5b-7 complex, a key lipophilic precursor of the MAC complex, which associates with the outer leaflet and reduces the energy for membrane bending. This Homo sapiens (Human) protein is Complement component C7.